Consider the following 258-residue polypeptide: Phosphate import ATP-binding protein PstB (258 aa).

In terms of domain architecture, ABC transporter spans 13–253 (IKIENLNLWY…PREKSTEDYI (241 aa)). 45–52 (GPSGCGKS) lines the ATP pocket.

This sequence belongs to the ABC transporter superfamily. Phosphate importer (TC 3.A.1.7) family. As to quaternary structure, the complex is composed of two ATP-binding proteins (PstB), two transmembrane proteins (PstC and PstA) and a solute-binding protein (PstS).

It localises to the cell membrane. It catalyses the reaction phosphate(out) + ATP + H2O = ADP + 2 phosphate(in) + H(+). Part of the ABC transporter complex PstSACB involved in phosphate import. Responsible for energy coupling to the transport system. The chain is Phosphate import ATP-binding protein PstB from Methanosarcina barkeri (strain Fusaro / DSM 804).